The sequence spans 128 residues: Ribonuclease P protein component (128 aa).

It belongs to the RnpA family. In terms of assembly, consists of a catalytic RNA component (M1 or rnpB) and a protein subunit.

The enzyme catalyses Endonucleolytic cleavage of RNA, removing 5'-extranucleotides from tRNA precursor.. RNaseP catalyzes the removal of the 5'-leader sequence from pre-tRNA to produce the mature 5'-terminus. It can also cleave other RNA substrates such as 4.5S RNA. The protein component plays an auxiliary but essential role in vivo by binding to the 5'-leader sequence and broadening the substrate specificity of the ribozyme. The polypeptide is Ribonuclease P protein component (Mycoplasma genitalium (strain ATCC 33530 / DSM 19775 / NCTC 10195 / G37) (Mycoplasmoides genitalium)).